The following is a 415-amino-acid chain: Putative competence-damage inducible protein (415 aa).

Belongs to the CinA family.

This Listeria welshimeri serovar 6b (strain ATCC 35897 / DSM 20650 / CCUG 15529 / CIP 8149 / NCTC 11857 / SLCC 5334 / V8) protein is Putative competence-damage inducible protein.